Consider the following 512-residue polypeptide: Maturase K (512 aa).

The protein belongs to the intron maturase 2 family. MatK subfamily.

The protein resides in the plastid. It localises to the chloroplast. Its function is as follows. Usually encoded in the trnK tRNA gene intron. Probably assists in splicing its own and other chloroplast group II introns. The chain is Maturase K from Lilium canadense (Canada lily).